We begin with the raw amino-acid sequence, 587 residues long: 5-aminolevulinate synthase, erythroid-specific, mitochondrial (587 aa).

Residues 1-49 (MVAAAMLLRSCPVLSQGPTGLLGKVAKTYQFLFSIGRCPILATQGPTCS) constitute a mitochondrion transit peptide. Residue Arg-163 participates in succinyl-CoA binding. Pyridoxal 5'-phosphate is bound by residues Cys-258 and Phe-259. Residues Ser-280 and Lys-299 each coordinate succinyl-CoA. Pyridoxal 5'-phosphate contacts are provided by Ser-332, His-360, and Thr-388. Residue Lys-391 is part of the active site. At Lys-391 the chain carries N6-(pyridoxal phosphate)lysine. The pyridoxal 5'-phosphate site is built by Thr-420 and Thr-421. Thr-508 is a succinyl-CoA binding site.

This sequence belongs to the class-II pyridoxal-phosphate-dependent aminotransferase family. As to quaternary structure, homodimer. Interacts with SUCLA2. Requires pyridoxal 5'-phosphate as cofactor. As to expression, predomnantly expressed in erythroid cells.

The protein localises to the mitochondrion inner membrane. Its subcellular location is the mitochondrion. The enzyme catalyses succinyl-CoA + glycine + H(+) = 5-aminolevulinate + CO2 + CoA. The protein operates within porphyrin-containing compound metabolism; protoporphyrin-IX biosynthesis; 5-aminolevulinate from glycine: step 1/1. In terms of biological role, catalyzes the pyridoxal 5'-phosphate (PLP)-dependent condensation of succinyl-CoA and glycine to form aminolevulinic acid (ALA), with CoA and CO2 as by-products. Contributes significantly to heme formation during erythropoiesis. This Mus musculus (Mouse) protein is 5-aminolevulinate synthase, erythroid-specific, mitochondrial (Alas2).